Reading from the N-terminus, the 456-residue chain is Bifunctional protein GlmU (456 aa).

Residues 1 to 230 (MDKRFAVVLA…FQETLGVNDR (230 aa)) are pyrophosphorylase. UDP-N-acetyl-alpha-D-glucosamine contacts are provided by residues 9 to 12 (LAAG), K23, Q73, and 78 to 79 (GT). Residue D103 coordinates Mg(2+). The UDP-N-acetyl-alpha-D-glucosamine site is built by G140, E155, N170, and N228. N228 is a Mg(2+) binding site. The segment at 231–251 (VALSQAEIYMKQRINKRHMQN) is linker. The tract at residues 252-456 (GVSLIDPDNT…EDYAENIHKK (205 aa)) is N-acetyltransferase. R333 and K351 together coordinate UDP-N-acetyl-alpha-D-glucosamine. H363 (proton acceptor) is an active-site residue. Positions 366 and 377 each coordinate UDP-N-acetyl-alpha-D-glucosamine. Acetyl-CoA is bound by residues 386-387 (NY), A423, and R440.

In the N-terminal section; belongs to the N-acetylglucosamine-1-phosphate uridyltransferase family. The protein in the C-terminal section; belongs to the transferase hexapeptide repeat family. As to quaternary structure, homotrimer. Mg(2+) is required as a cofactor.

Its subcellular location is the cytoplasm. It catalyses the reaction alpha-D-glucosamine 1-phosphate + acetyl-CoA = N-acetyl-alpha-D-glucosamine 1-phosphate + CoA + H(+). The enzyme catalyses N-acetyl-alpha-D-glucosamine 1-phosphate + UTP + H(+) = UDP-N-acetyl-alpha-D-glucosamine + diphosphate. It functions in the pathway nucleotide-sugar biosynthesis; UDP-N-acetyl-alpha-D-glucosamine biosynthesis; N-acetyl-alpha-D-glucosamine 1-phosphate from alpha-D-glucosamine 6-phosphate (route II): step 2/2. The protein operates within nucleotide-sugar biosynthesis; UDP-N-acetyl-alpha-D-glucosamine biosynthesis; UDP-N-acetyl-alpha-D-glucosamine from N-acetyl-alpha-D-glucosamine 1-phosphate: step 1/1. Its pathway is bacterial outer membrane biogenesis; LPS lipid A biosynthesis. Its function is as follows. Catalyzes the last two sequential reactions in the de novo biosynthetic pathway for UDP-N-acetylglucosamine (UDP-GlcNAc). The C-terminal domain catalyzes the transfer of acetyl group from acetyl coenzyme A to glucosamine-1-phosphate (GlcN-1-P) to produce N-acetylglucosamine-1-phosphate (GlcNAc-1-P), which is converted into UDP-GlcNAc by the transfer of uridine 5-monophosphate (from uridine 5-triphosphate), a reaction catalyzed by the N-terminal domain. The chain is Bifunctional protein GlmU from Bacillus licheniformis (strain ATCC 14580 / DSM 13 / JCM 2505 / CCUG 7422 / NBRC 12200 / NCIMB 9375 / NCTC 10341 / NRRL NRS-1264 / Gibson 46).